We begin with the raw amino-acid sequence, 525 residues long: ALBINO3-like protein 2, chloroplastic (525 aa).

Transmembrane regions (helical) follow at residues 99 to 119 (WMII…LLIL), 167 to 187 (LWFF…MASI), 217 to 237 (FGPV…QISF), and 262 to 282 (ILSV…LVYW). 4 TPR repeats span residues 346-379 (PEEL…DPGY), 380-413 (VRGL…LLDE), 425-458 (MLAS…REPG), and 467-500 (FEAL…NPAY).

Belongs to the OXA1/ALB3/YidC (TC 2.A.9.2) family.

It localises to the plastid. The protein resides in the chloroplast thylakoid membrane. Its function is as follows. Probably required for the insertion of integral membrane proteins into the chloroplast thylakoid membranes. This chain is ALBINO3-like protein 2, chloroplastic (ALB3L2), found in Arabidopsis thaliana (Mouse-ear cress).